The chain runs to 407 residues: uncharacterized protein (407 aa).

A Glycyl lysine isopeptide (Lys-Gly) (interchain with G-Cter in ubiquitin) cross-link involves residue Lys22.

The protein belongs to the SVF1 family.

Its subcellular location is the cytoplasm. This is an uncharacterized protein from Saccharomyces cerevisiae (strain ATCC 204508 / S288c) (Baker's yeast).